We begin with the raw amino-acid sequence, 220 residues long: Metalloproteinase inhibitor 2 (220 aa).

The first 26 residues, 1-26 (MGATARSLRLALGLLLLGTLPRGADA), serve as a signal peptide directing secretion. Cys-27 is a Zn(2+) binding site. Involved in metalloproteinase-binding stretches follow at residues 27–30 (CSCS) and 95–96 (SA). 6 cysteine pairs are disulfide-bonded: Cys-27/Cys-98, Cys-29/Cys-127, Cys-39/Cys-152, Cys-154/Cys-201, Cys-159/Cys-164, and Cys-172/Cys-193. The region spanning 27–152 (CSCSPVHPQQ…SLNHRYQMGC (126 aa)) is the NTR domain.

It belongs to the protease inhibitor I35 (TIMP) family. In terms of assembly, interacts (via the C-terminal) with MMP2 (via the C-terminal PEX domain); the interaction inhibits the MMP2 activity. In terms of processing, the activity of TIMP2 is dependent on the presence of disulfide bonds. As to expression, predominantly expressed in the lung in alveolar macrophages and epithelial cells. Also found in brain, kidney, intestine, spleen and heart.

The protein localises to the secreted. In terms of biological role, complexes with metalloproteinases (such as collagenases) and irreversibly inactivates them by binding to their catalytic zinc cofactor. This Cavia porcellus (Guinea pig) protein is Metalloproteinase inhibitor 2 (TIMP2).